Here is a 256-residue protein sequence, read N- to C-terminus: 1-(5-phosphoribosyl)-5-[(5-phosphoribosylamino)methylideneamino] imidazole-4-carboxamide isomerase (256 aa).

Asp-8 acts as the Proton acceptor in catalysis. Catalysis depends on Asp-129, which acts as the Proton donor.

It belongs to the HisA/HisF family.

It is found in the cytoplasm. The enzyme catalyses 1-(5-phospho-beta-D-ribosyl)-5-[(5-phospho-beta-D-ribosylamino)methylideneamino]imidazole-4-carboxamide = 5-[(5-phospho-1-deoxy-D-ribulos-1-ylimino)methylamino]-1-(5-phospho-beta-D-ribosyl)imidazole-4-carboxamide. It participates in amino-acid biosynthesis; L-histidine biosynthesis; L-histidine from 5-phospho-alpha-D-ribose 1-diphosphate: step 4/9. The polypeptide is 1-(5-phosphoribosyl)-5-[(5-phosphoribosylamino)methylideneamino] imidazole-4-carboxamide isomerase (Synechococcus sp. (strain WH7803)).